Reading from the N-terminus, the 758-residue chain is MSISRRSFLQGVGIGCSACALGAFPPGALARNPIAGINGKTTLTPSLCEMCSFRCPIQAQVVNNKTVFIQGNPSAPQQGTRICARGGSGVSLVNDPQRIVKPMKRTGPRGDGEWQVISWQQAYQEIAAKMNAIKAQHGPESVAFSSKSGSLSSHLFHLATAFGSPNTFTHASTCPAGKAIAAKVMMGGDLAMDIANTRYLVSFGHNLYEGIEVADTHELMTAQEKGAKMVSFDPRLSIFSSKADEWHAIRPGGDLAVLLAMCHVMIDEQLYDASFVERYTSGFEQLAQAVKETTPEWAAAQADVPADVIVRVTRELAACAPHAIVSPGHRATFSQEEIDMRRMIFTLNVLLGNIEREGGLYQKKNASVYNKLAGEKVAPTLAKLNIKNMPKPTAQRIDLVAPQFKYIAAGGGVVQSIIDSALTQKPYPIKAWIMSRHNPFQTVTCRSDLVKTVEQLDLVVSCDVYLSESAAYADYLLPECTYLERDEEVSDMSGLHPAYALRQQVVEPIGEARPSWQIWKELGEQLGLGQYYPWQDMQTRQLYQLNGDHALAKELRQKGYLEWGVPLLLREPESVRQFTARYPGAIATDSDNTYGEQLRFKSPSGKIELYSATLEELLPGYGVPRVRDFALKKENELYFIQGKVAVHTNGATQYVPLLSELMWDNAVWVHPQTAQEKGIKTGDEIWLENATGKEKGKALVTPGIRPDTLFVYMGFGAKAGAKTAATTHGIHCGNLLPHVTSPVSGTVVHTAGVTLSRA.

A signal peptide (tat-type signal) is located at residues 1–30 (MSISRRSFLQGVGIGCSACALGAFPPGALA). A 4Fe-4S Mo/W bis-MGD-type domain is found at 41–97 (TTLTPSLCEMCSFRCPIQAQVVNNKTVFIQGNPSAPQQGTRICARGGSGVSLVNDPQ). The [4Fe-4S] cluster site is built by Cys-48, Cys-51, Cys-55, and Cys-83.

It belongs to the prokaryotic molybdopterin-containing oxidoreductase family. As to quaternary structure, composed of three subunits: PhsA, PhsB and PhsC. Requires [4Fe-4S] cluster as cofactor. Mo-bis(molybdopterin guanine dinucleotide) is required as a cofactor. Post-translationally, predicted to be exported by the Tat system. The position of the signal peptide cleavage has not been experimentally proven.

The protein resides in the periplasm. The enzyme catalyses a quinone + hydrogen sulfide + sulfite + 2 H(+) = thiosulfate + a quinol. Its function is as follows. Component of the PhsABC thiosulfate reductase that catalyzes the reduction of thiosulfate to sulfite and hydrogen sulfide, with menaquinol as the sole electron donor. Proton motive force (PMF) is required to drive transmembrane electron transfer within the reductase. The PhsA subunit contains the active site molybdenum-bis(molybdopterin guanine dinucleotide) (Mo-bis-MGD) cofactor. The protein is Thiosulfate reductase molybdopterin-containing subunit PhsA of Salmonella typhimurium (strain LT2 / SGSC1412 / ATCC 700720).